Reading from the N-terminus, the 192-residue chain is Xanthine phosphoribosyltransferase (192 aa).

Residues L20 and N27 each coordinate xanthine. A 5-phospho-alpha-D-ribose 1-diphosphate-binding site is contributed by A128–A132. K156 provides a ligand contact to xanthine.

This sequence belongs to the purine/pyrimidine phosphoribosyltransferase family. Xpt subfamily. Homodimer.

It is found in the cytoplasm. The enzyme catalyses XMP + diphosphate = xanthine + 5-phospho-alpha-D-ribose 1-diphosphate. Its pathway is purine metabolism; XMP biosynthesis via salvage pathway; XMP from xanthine: step 1/1. Converts the preformed base xanthine, a product of nucleic acid breakdown, to xanthosine 5'-monophosphate (XMP), so it can be reused for RNA or DNA synthesis. The polypeptide is Xanthine phosphoribosyltransferase (Ligilactobacillus salivarius (strain UCC118) (Lactobacillus salivarius)).